A 1170-amino-acid polypeptide reads, in one-letter code: Cellulose synthase-like protein D2 (1170 aa).

3 disordered regions span residues Met1 to His48, Ser54 to Glu73, and Asn269 to Ser295. Over residues Arg10–Gly24 the composition is skewed to low complexity. Residues Asn273–Gly288 show a composition bias toward gly residues. Transmembrane regions (helical) follow at residues Val311–Ala331 and Ala341–Leu361. Asp441 is an active-site residue. A coiled-coil region spans residues His527–Lys551. Asp873 is a catalytic residue. 6 helical membrane-spanning segments follow: residues Ile955–Val975, Thr981–Ile1001, Leu1027–Leu1047, Ser1070–Phe1090, Leu1104–Gly1124, and Thr1134–Ile1154.

This sequence belongs to the glycosyltransferase 2 family. Plant cellulose synthase-like D subfamily.

It localises to the golgi apparatus membrane. Thought to be a Golgi-localized beta-glycan synthase that polymerize the backbones of noncellulosic polysaccharides (hemicelluloses) of plant cell wall. The chain is Cellulose synthase-like protein D2 (CSLD2) from Oryza sativa subsp. japonica (Rice).